A 263-amino-acid chain; its full sequence is Regulatory protein RecX (263 aa).

Belongs to the RecX family.

The protein resides in the cytoplasm. Functionally, modulates RecA activity. The polypeptide is Regulatory protein RecX (Bacillus pumilus (strain SAFR-032)).